The primary structure comprises 221 residues: Growth hormone-releasing peptides (221 aa).

The first 25 residues, 1-25 (MHLKIGTLTIRTIMLFTLCTFLTLF), serve as a signal peptide directing secretion. Positions 26–95 (AFSTCFDETK…QPENEFLQER (70 aa)) are excised as a propeptide. Phenylalanine amide is present on Phe107. The propeptide occupies 110-127 (TSDDKIAKSIPSFDKIAK). 3 positions are modified to phenylalanine amide: Phe136, Phe156, and Phe176. The propeptide occupies 179 to 221 (TPHSDRLQYEMNSHPLELKNPEEDSDRKKRQAMTFRIRTDLQM).

The protein belongs to the FARP (FMRFamide related peptide) family. As to expression, observed in the suprachiasmatic nucleus and in several telencephalic and diencephalic regions.

It is found in the secreted. Functionally, primary role is to release GH from the pituitary. May act as an endogenous ligand in the bullfrog hypothalamo-hypophysial system. In Aquarana catesbeiana (American bullfrog), this protein is Growth hormone-releasing peptides.